The primary structure comprises 603 residues: Complement factor I (603 aa).

The N-terminal stretch at 1 to 18 is a signal peptide; the sequence is MKLAHLSLFLLALHLSSS. 20 disulfide bridges follow: cysteine 36–cysteine 260, cysteine 46–cysteine 57, cysteine 51–cysteine 62, cysteine 64–cysteine 96, cysteine 70–cysteine 89, cysteine 78–cysteine 109, cysteine 144–cysteine 186, cysteine 157–cysteine 219, cysteine 191–cysteine 201, cysteine 234–cysteine 252, cysteine 246–cysteine 261, cysteine 264–cysteine 276, cysteine 271–cysteine 289, cysteine 283–cysteine 298, cysteine 348–cysteine 473, cysteine 386–cysteine 402, cysteine 394–cysteine 464, cysteine 487–cysteine 551, cysteine 515–cysteine 530, and cysteine 541–cysteine 570. The 54-residue stretch at 58–111 folds into the Kazal-like domain; that stretch reads IEGTCICKLPYQCPRAGTPVCAMNGRSYPTYCHQKSFECLHPEIKFSHNGTCAA. 4 N-linked (GlcNAc...) asparagine glycosylation sites follow: asparagine 106, asparagine 116, asparagine 174, and asparagine 182. Residues 117 to 217 enclose the SRCR domain; that stretch reads VSLIYGRTKT…TELSNGLAGV (101 aa). LDL-receptor class A domains lie at 218–262 and 263–299; these read VCYK…LCCK and GCRG…SRCE. The Ca(2+) site is built by lysine 244, asparagine 247, valine 249, aspartate 251, aspartate 257, and glutamate 258. The N-linked (GlcNAc...) asparagine glycan is linked to asparagine 267. Residues tyrosine 281, asparagine 284, glutamate 286, aspartate 288, aspartate 294, and glutamate 295 each coordinate Ca(2+). A Peptidase S1 domain is found at 361–594; it reads VIGGKPANVG…YFDWISYHVG (234 aa). Residues histidine 401 and aspartate 449 each act as charge relay system in the active site. Asparagine 514 carries N-linked (GlcNAc...) asparagine glycosylation. Serine 545 functions as the Charge relay system in the catalytic mechanism. Residue asparagine 556 is glycosylated (N-linked (GlcNAc...) asparagine).

Belongs to the peptidase S1 family. In terms of assembly, heterodimer of a light and heavy chains; disulfide-linked. The fully processed and mature protein circulates as a zymogen, and is allosterically activated by substrate-induced remodeling of the active site. Interacts with C3b. Interacts with complement factor H. In terms of tissue distribution, expressed in the liver by hepatocytes. Also present in other cells such as monocytes, fibroblasts or keratinocytes.

The protein localises to the secreted. It is found in the extracellular space. It carries out the reaction Inactivates complement subcomponents C3b, iC3b and C4b by proteolytic cleavage.. Trypsin-like serine protease that plays an essential role in regulating the immune response by controlling all complement pathways. Inhibits these pathways by cleaving three peptide bonds in the alpha-chain of C3b and two bonds in the alpha-chain of C4b thereby inactivating these proteins. Essential cofactors for these reactions include factor H and C4BP in the fluid phase and membrane cofactor protein/CD46 and CR1 on cell surfaces. The presence of these cofactors on healthy cells allows degradation of deposited C3b by CFI in order to prevent undesired complement activation, while in apoptotic cells or microbes, the absence of such cofactors leads to C3b-mediated complement activation and subsequent opsonization. This is Complement factor I (Cfi) from Mus musculus (Mouse).